The chain runs to 79 residues: SLTKTXXTIIXAMWAKRLFTSYPQTKTYFPHFDLHPDSAQLRKNIDNIHSALSKLSELHAYILRVDPVNFKLLSHXFLV.

An N-acetylserine modification is found at Ser-1. The 79-residue stretch at 1–79 (SLTKTXXTII…FKLLSHXFLV (79 aa)) folds into the Globin domain. A phosphoserine mark is found at Ser-38 and Ser-53. Residue His-59 participates in heme b binding.

It belongs to the globin family. As to quaternary structure, heterotetramer of two zeta chains and two epsilon chains.

The zeta chain is an alpha-type chain of mammalian embryonic hemoglobin. The sequence is that of Hemoglobin subunit zeta from Notamacropus eugenii (Tammar wallaby).